The primary structure comprises 542 residues: uncharacterized protein (542 aa).

Residues 256 to 275 (KKSTTTSSPPITTTHLSKPE) are disordered. Residues 258 to 269 (STTTSSPPITTT) show a composition bias toward low complexity.

This is an uncharacterized protein from Caenorhabditis elegans.